Here is a 353-residue protein sequence, read N- to C-terminus: Holliday junction branch migration complex subunit RuvB (353 aa).

The segment at 4–185 (ADRLITAVGG…FGIVQRLEFY (182 aa)) is large ATPase domain (RuvB-L). Residues isoleucine 24, arginine 25, glycine 66, lysine 69, threonine 70, threonine 71, 132-134 (EDF), arginine 175, tyrosine 185, and arginine 222 each bind ATP. Threonine 70 lines the Mg(2+) pocket. The small ATPAse domain (RuvB-S) stretch occupies residues 186–256 (NIADLSTIVA…TADKALNLLD (71 aa)). A head domain (RuvB-H) region spans residues 259–353 (EHGFDHQDRR…GEFVDDAADL (95 aa)). Positions 295, 314, and 319 each coordinate DNA.

It belongs to the RuvB family. In terms of assembly, homohexamer. Forms an RuvA(8)-RuvB(12)-Holliday junction (HJ) complex. HJ DNA is sandwiched between 2 RuvA tetramers; dsDNA enters through RuvA and exits via RuvB. An RuvB hexamer assembles on each DNA strand where it exits the tetramer. Each RuvB hexamer is contacted by two RuvA subunits (via domain III) on 2 adjacent RuvB subunits; this complex drives branch migration. In the full resolvosome a probable DNA-RuvA(4)-RuvB(12)-RuvC(2) complex forms which resolves the HJ.

The protein resides in the cytoplasm. It carries out the reaction ATP + H2O = ADP + phosphate + H(+). Its function is as follows. The RuvA-RuvB-RuvC complex processes Holliday junction (HJ) DNA during genetic recombination and DNA repair, while the RuvA-RuvB complex plays an important role in the rescue of blocked DNA replication forks via replication fork reversal (RFR). RuvA specifically binds to HJ cruciform DNA, conferring on it an open structure. The RuvB hexamer acts as an ATP-dependent pump, pulling dsDNA into and through the RuvAB complex. RuvB forms 2 homohexamers on either side of HJ DNA bound by 1 or 2 RuvA tetramers; 4 subunits per hexamer contact DNA at a time. Coordinated motions by a converter formed by DNA-disengaged RuvB subunits stimulates ATP hydrolysis and nucleotide exchange. Immobilization of the converter enables RuvB to convert the ATP-contained energy into a lever motion, pulling 2 nucleotides of DNA out of the RuvA tetramer per ATP hydrolyzed, thus driving DNA branch migration. The RuvB motors rotate together with the DNA substrate, which together with the progressing nucleotide cycle form the mechanistic basis for DNA recombination by continuous HJ branch migration. Branch migration allows RuvC to scan DNA until it finds its consensus sequence, where it cleaves and resolves cruciform DNA. This is Holliday junction branch migration complex subunit RuvB from Pseudomonas syringae pv. tomato (strain ATCC BAA-871 / DC3000).